Here is a 405-residue protein sequence, read N- to C-terminus: 5-azacytidine-induced protein 2 (405 aa).

Residues 1–198 (MDTLVEDDIC…TELQKARQTG (198 aa)) form a homodimerization region. Residues 40-197 (ALVTAYEDIK…RTELQKARQT (158 aa)) are a coiled coil. The tract at residues 229–270 (SDNMQHAYWELKREMSNLHLVTQVQAELLRKLKTSAAVKKAC) is interaction with TBK1 and IKBKE. Phosphoserine is present on residues Ser-331 and Ser-366. Positions 357–377 (LEDNSWVFPSPPKSSETAFGE) are disordered.

In terms of assembly, homodimer. Interacts with IKBKE and TBK1. Interacts with TICAM1. Interacts with TAX1BP1. Interacts with CALCOCO2. In terms of processing, ubiquitinated via 'Lys-48'-linked polyubiquitination by TRIM38, leading to its degradation. In terms of tissue distribution, testis, ovary, heart, lung, kidney and brain. Expressed mainly in the spermatocytes or spermatids in the testis.

It localises to the cytoplasm. Its function is as follows. Adapter protein which binds TBK1 and IKBKE playing a role in antiviral innate immunity. Activates serine/threonine-protein kinase TBK1 and facilitates its oligomerization. Enhances the phosphorylation of NF-kappa-B p65 subunit RELA by TBK1. Promotes TBK1-induced as well as TNF-alpha or PMA-induced activation of NF-kappa-B. Participates in IFNB promoter activation via TICAM1. The protein is 5-azacytidine-induced protein 2 (Azi2) of Mus musculus (Mouse).